The primary structure comprises 420 residues: Threonine aspartase 1 (420 aa).

A disordered region spans residues 1 to 23 (MTMEKGMSSGEGLPSRSSQVSAG). The active-site Nucleophile is the Thr234.

It belongs to the Ntn-hydrolase family. Intramolecular proteolysis generates 2 subunits, alpha and beta, which reassemble through a non-covalent association to form the fully active enzyme.

Protease responsible for KMT2A/MLL1 processing and activation. It also activates KMT2D/MLL2. Through substrate activation, it controls the expression of HOXA genes, and the expression of key cell cycle regulators including CCNA1, CCNB1, CCNE1 and CDKN2A. This chain is Threonine aspartase 1 (TASP1), found in Homo sapiens (Human).